A 290-amino-acid chain; its full sequence is MALLLELAHGLPWLYFSLVFLFSLMIGSFLNVVIHRLPIMLEREWQAEYRSYFNPDDEGVDEPPYNLMVPRSCCPHCNHPITALENIPLLSWLWLRGRCRGCQAPISARYPLVELLTALLSVAVAMTLAPGWGTLAALLLTWVLVALTFIDLDKMLLPDQLTLPLLWGGLLFNLLGGFVSLGDAVIGAMAGYLVLWSLYWAFKLLTGKEGMGYGDFKLLAALGAWLGWQALPIVLLLSSLVGAFMGIGLILLRNHHQSKPIPFGPYLAIAGWIALLWGDSITRWYLTNFL.

Residues 14-34 (LYFSLVFLFSLMIGSFLNVVI) traverse the membrane as a helical segment. Zn(2+) is bound by residues Cys-74, Cys-77, Cys-99, and Cys-102. The next 6 helical transmembrane spans lie at 106–126 (ISARYPLVELLTALLSVAVAM), 130–150 (PGWGTLAALLLTWVLVALTFI), 161–181 (LTLPLLWGGLLFNLLGGFVSL), 185–205 (VIGAMAGYLVLWSLYWAFKLL), 232–252 (PIVLLLSSLVGAFMGIGLILL), and 261–281 (IPFGPYLAIAGWIALLWGDSI).

Belongs to the peptidase A24 family. Zn(2+) is required as a cofactor.

The protein localises to the cell inner membrane. The enzyme catalyses Typically cleaves a -Gly-|-Phe- bond to release an N-terminal, basic peptide of 5-8 residues from type IV prepilin, and then N-methylates the new N-terminal amino group, the methyl donor being S-adenosyl-L-methionine.. Functionally, plays an essential role in type IV pili and type II pseudopili formation by proteolytically removing the leader sequence from substrate proteins and subsequently monomethylating the alpha-amino group of the newly exposed N-terminal phenylalanine. The sequence is that of Prepilin leader peptidase/N-methyltransferase (tapD) from Aeromonas hydrophila.